A 143-amino-acid chain; its full sequence is Late embryogenesis abundant protein 1 (143 aa).

Residues 1–17 show a composition bias toward low complexity; it reads MSSQQNQNRQGEQQEQG. The segment at 1–143 is disordered; sequence MSSQQNQNRQ…QAGEKVKGRD (143 aa). Repeat copies occupy residues 47-57, 69-79, 80-90, and 91-101. Composition is skewed to basic and acidic residues over residues 47–60 and 69–143; these read KTAEFRDSAGETIR and KGQE…KGRD. Residues 47-101 are 4 X 11 AA approximate repeats; it reads KTAEFRDSAGETIRDLTGQAQEKGQEFKERAGEKAEETKQRAGEKMDETKQRAGE.

It belongs to the LEA type 4 family.

Functionally, may be involved in defense against water stress. This Aphelenchoides avenae (Mycophagous nematode worm) protein is Late embryogenesis abundant protein 1.